A 604-amino-acid polypeptide reads, in one-letter code: MKLLGLLSGLVVVATALPQADFDLQSSLLTDPTKVAGTTFDYIIAGGGLTGLTVAARLTENPNITVLVIERGFYESNIGPIIENLNHYGDIFGTSVDQAFETIPLAIHNRTEIVRSGKGLGGSTLVNGGSWTRPHKAQVDSWESVFGMEGWNWDSLLPYMKKIEAARAPNAEQIAAGHYYDPSCHGTDGIVHVGPRDTGESFSPMIKSLMKNANNSGIPVQKDLGCGVPHGISMILNDVHEDQTRSDAAREWLLPNYQRSNLKILTGQMVGKVLFDTTTTTPKAVGVNFGTHAKVNFDVHARHEVLLASGSAVSPQILEHSGVGLKAVLDNVGVEQLVDLPVGLNLQDQTTTTVRSNINSIGAGQGQAAYFATFNETFGDQAPRAHQLLNTKLEEWAKDVVSRGGFHNETALLVQYENYRDWLVNEDVSFAEIFIDTAGKLNLDLWDLIPFTRGYVHILDSDPYLRRFAYDPQFFLNELDVLGQAAASKLAREISNTGEMTQYFNGEAIPGNNLAYNATLDDWVDHVKQNFRANYHGVGTCSMMSKELGGVVDAAARVYGVESLRVIDGSIPPTQLSSHVMTVFYGMAQKVSEAILADYNATVN.

Residues 1–16 (MKLLGLLSGLVVVATA) form the signal peptide. 2 residues coordinate FAD: Leu-49 and Thr-50. The N-linked (GlcNAc...) asparagine glycan is linked to Asn-63. Glu-70 is an FAD binding site. Asn-109 carries N-linked (GlcNAc...) asparagine glycosylation. 4 residues coordinate FAD: Ser-123, Asn-127, Gly-128, and Ser-130. A disulfide bridge links Cys-184 with Cys-226. N-linked (GlcNAc...) asparagine glycosylation is present at Asn-214. Val-270 is a binding site for FAD. N-linked (GlcNAc...) asparagine glycosylation is found at Asn-375, Asn-408, and Asn-517. His-536 serves as the catalytic Proton acceptor. Residues Arg-557 and Val-558 each contribute to the O2 site. The FAD site is built by Gly-569 and Met-581. The N-linked (GlcNAc...) asparagine glycan is linked to Asn-600.

It belongs to the GMC oxidoreductase family. Homodimer. FAD is required as a cofactor.

The protein resides in the secreted. It is found in the cell wall. It localises to the cytoplasm. The protein localises to the extracellular space. Its subcellular location is the extracellular matrix. The enzyme catalyses beta-D-glucose + O2 = D-glucono-1,5-lactone + H2O2. In terms of biological role, glucose oxidase catalyzes the oxidation of beta-D-glucose to D-glucono-delta-lactone and hydrogen peroxide in the presence of molecular oxygen. D-glucono-delta-lactone is sequentially hydrolyzed by lactonase to D-gluconic acid, and the resulting hydrogen peroxide is hydrolyzed by catalase to oxygen and water. Acts as a key factor contributing to fungal disease of apple. The production of gluconic acid leads to host tissue acidification that enhances the expression of pectolytic enzymes and the establishment of conditions for necrotrophic development of P.expansum. The sequence is that of Glucose oxidase 2 from Penicillium expansum (Blue mold rot fungus).